A 272-amino-acid polypeptide reads, in one-letter code: Cell division protein ZipA (272 aa).

Residues 1 to 4 (METH) are Periplasmic-facing. The helical transmembrane segment at 5–25 (ILFFILAGLLIAVLIGYSIWS) threads the bilayer. Residues 26–272 (ARREKSRIFS…RQNYLLRVAN (247 aa)) lie on the Cytoplasmic side of the membrane.

The protein belongs to the ZipA family. As to quaternary structure, interacts with FtsZ via their C-terminal domains.

It is found in the cell inner membrane. In terms of biological role, essential cell division protein that stabilizes the FtsZ protofilaments by cross-linking them and that serves as a cytoplasmic membrane anchor for the Z ring. Also required for the recruitment to the septal ring of downstream cell division proteins. The polypeptide is Cell division protein ZipA (Glaesserella parasuis serovar 5 (strain SH0165) (Haemophilus parasuis)).